The sequence spans 127 residues: Acetylcholine receptor subunit alpha (127 aa).

Residues 1–127 (ADGIFAIDQF…YFIVNVIIPC (127 aa)) are Extracellular-facing. The cysteines at positions 33 and 47 are disulfide-linked. 2 N-linked (GlcNAc...) asparagine glycosylation sites follow: Asn46 and Asn94. Cys97 and Cys98 are joined by a disulfide.

Belongs to the ligand-gated ion channel (TC 1.A.9) family. Acetylcholine receptor (TC 1.A.9.1) subfamily. Alpha-1/CHRNA1 sub-subfamily. In terms of assembly, one of the alpha chains that assemble within the acetylcholine receptor, a pentamer of two alpha chains, a beta, a delta, and a gamma or epsilon chains.

The protein resides in the postsynaptic cell membrane. The protein localises to the cell membrane. The catalysed reaction is K(+)(in) = K(+)(out). The enzyme catalyses Na(+)(in) = Na(+)(out). Its function is as follows. Upon acetylcholine binding, the AChR responds by an extensive change in conformation that affects all subunits and leads to opening of an ion-conducting channel across the plasma membrane. Does not bind alpha-bungarotoxin. The chain is Acetylcholine receptor subunit alpha (CHRNA1) from Natrix tessellata (Dice snake).